A 403-amino-acid chain; its full sequence is Arginine biosynthesis bifunctional protein ArgJ (403 aa).

Threonine 151, lysine 177, threonine 188, glutamate 275, asparagine 398, and serine 403 together coordinate substrate. Residue threonine 188 is the Nucleophile of the active site.

Belongs to the ArgJ family. Heterotetramer of two alpha and two beta chains.

The protein localises to the cytoplasm. The catalysed reaction is N(2)-acetyl-L-ornithine + L-glutamate = N-acetyl-L-glutamate + L-ornithine. The enzyme catalyses L-glutamate + acetyl-CoA = N-acetyl-L-glutamate + CoA + H(+). It participates in amino-acid biosynthesis; L-arginine biosynthesis; L-ornithine and N-acetyl-L-glutamate from L-glutamate and N(2)-acetyl-L-ornithine (cyclic): step 1/1. It functions in the pathway amino-acid biosynthesis; L-arginine biosynthesis; N(2)-acetyl-L-ornithine from L-glutamate: step 1/4. Catalyzes two activities which are involved in the cyclic version of arginine biosynthesis: the synthesis of N-acetylglutamate from glutamate and acetyl-CoA as the acetyl donor, and of ornithine by transacetylation between N(2)-acetylornithine and glutamate. The sequence is that of Arginine biosynthesis bifunctional protein ArgJ from Caulobacter vibrioides (strain ATCC 19089 / CIP 103742 / CB 15) (Caulobacter crescentus).